The chain runs to 183 residues: Globin-like protein 26 (183 aa).

Residues M1–Q25 form a disordered region. A lipid anchor (N-myristoyl glycine) is attached at G2. The Nuclear localization signal motif lies at P12–E18. The 141-residue stretch at I26–S166 folds into the Globin domain. Heme contacts are provided by H77 and H109.

It belongs to the globin family. In terms of assembly, homodimer. Occurs in an equilibrium of monomeric and dimeric forms in solution. As to expression, detected in the head mesodermal cell. In the tail region, detected in the stomatointestinal and anal depressor muscle cells.

The protein resides in the cytoplasm. The protein localises to the nucleus lamina. Its subcellular location is the cell membrane. Functionally, plays a role in electron transport. Utilizes the bis-histidyl hexacoordinated complex with iron to transfer electrons to cytochrome c and molecular oxygen. Plays a regulatory role in the periodicity of the defecation cycle under oxidative stress conditions. Not involved in imparting protection against general conditions of oxidative stress. May participate in redox reactions under anaerobic conditions. The polypeptide is Globin-like protein 26 (Caenorhabditis elegans).